The primary structure comprises 100 residues: Urease subunit gamma (100 aa).

It belongs to the urease gamma subunit family. As to quaternary structure, heterotrimer of UreA (gamma), UreB (beta) and UreC (alpha) subunits. Three heterotrimers associate to form the active enzyme.

The protein localises to the cytoplasm. The enzyme catalyses urea + 2 H2O + H(+) = hydrogencarbonate + 2 NH4(+). It participates in nitrogen metabolism; urea degradation; CO(2) and NH(3) from urea (urease route): step 1/1. This Klebsiella pneumoniae protein is Urease subunit gamma.